A 126-amino-acid chain; its full sequence is Acidic phospholipase A2 S1E6-a (126 aa).

An N-terminal signal peptide occupies residues 1–3 (VEG). Disulfide bonds link C29-C119, C31-C47, C46-C98, C52-C126, C53-C91, C60-C84, and C78-C89. 3 residues coordinate Ca(2+): Y30, G32, and G34. The active site involves H50. D51 contacts Ca(2+). D92 is a catalytic residue.

Homodimer. It depends on Ca(2+) as a cofactor. Expressed by the venom gland.

The protein localises to the secreted. The catalysed reaction is a 1,2-diacyl-sn-glycero-3-phosphocholine + H2O = a 1-acyl-sn-glycero-3-phosphocholine + a fatty acid + H(+). Snake venom phospholipase A2 (PLA2) that inhibits ADP-induced platelet aggregation. PLA2 catalyzes the calcium-dependent hydrolysis of the 2-acyl groups in 3-sn-phosphoglycerides. The protein is Acidic phospholipase A2 S1E6-a of Calloselasma rhodostoma (Malayan pit viper).